We begin with the raw amino-acid sequence, 98 residues long: UPF0235 protein Ping_3043 (98 aa).

It belongs to the UPF0235 family.

This chain is UPF0235 protein Ping_3043, found in Psychromonas ingrahamii (strain DSM 17664 / CCUG 51855 / 37).